Consider the following 183-residue polypeptide: ATP-dependent protease subunit HslV (183 aa).

The active site involves Thr13. Positions 168, 171, and 174 each coordinate Na(+).

It belongs to the peptidase T1B family. HslV subfamily. A double ring-shaped homohexamer of HslV is capped on each side by a ring-shaped HslU homohexamer. The assembly of the HslU/HslV complex is dependent on binding of ATP.

It localises to the cytoplasm. The enzyme catalyses ATP-dependent cleavage of peptide bonds with broad specificity.. With respect to regulation, allosterically activated by HslU binding. Protease subunit of a proteasome-like degradation complex believed to be a general protein degrading machinery. This Xylella fastidiosa (strain M23) protein is ATP-dependent protease subunit HslV.